Consider the following 188-residue polypeptide: CyanoP (188 aa).

An N-terminal signal peptide occupies residues 1–23 (MLKKSLSTAVVLVTLLLSFTLTA). C24 carries the N-palmitoyl cysteine lipid modification. C24 is lipidated: S-diacylglycerol cysteine.

It belongs to the PsbP family. CyanoP subfamily. In terms of assembly, monomer. Present in about 3% of photosystem II (PSII) preparations. Purifies with partially assembled PSII complexes, in addition to a small amount of monomeric and dimeric PSII, and trimeric PSI.

The protein localises to the cellular thylakoid membrane. Its function is as follows. Plays a role in the early stages of photosystem II (PSII) assembly; binds to D2 (psbD) and may facilitate its incorporation into PSII. Required for optimal photoautotrophic growth in the absence of Ca(2+) or Cl(-), functions in optimizing PSII water oxidation/O(2) evolving activity. Might be involved in assembly of the oxygen evolving complex. This chain is CyanoP, found in Synechocystis sp. (strain ATCC 27184 / PCC 6803 / Kazusa).